The following is a 597-amino-acid chain: Scarecrow-like protein 5 (597 aa).

Positions glutamate 111–asparagine 172 are disordered. Residues asparagine 123 to serine 169 show a composition bias toward low complexity. The region spanning serine 218 to arginine 597 is the GRAS domain. The leucine repeat I (LRI) stretch occupies residues glycine 225–serine 285. The segment at methionine 304–glycine 369 is VHIID. Residues valine 335 to aspartate 339 carry the VHIID motif. Residues leucine 385–lysine 417 form a leucine repeat II (LRII) region. Residues leucine 426–asparagine 520 form a PFYRE region. The segment at alanine 523–arginine 597 is SAW.

It belongs to the GRAS family. In terms of tissue distribution, expressed in seedlings, roots, shoots, leaves, flowers and siliques.

It is found in the nucleus. Its function is as follows. Probable transcription factor involved in plant development. In Arabidopsis thaliana (Mouse-ear cress), this protein is Scarecrow-like protein 5 (SCL5).